A 154-amino-acid chain; its full sequence is Endoribonuclease YbeY (154 aa).

Zn(2+) contacts are provided by His115, His119, and His125.

It belongs to the endoribonuclease YbeY family. Zn(2+) serves as cofactor.

It localises to the cytoplasm. Its function is as follows. Single strand-specific metallo-endoribonuclease involved in late-stage 70S ribosome quality control and in maturation of the 3' terminus of the 16S rRNA. The protein is Endoribonuclease YbeY of Halorhodospira halophila (strain DSM 244 / SL1) (Ectothiorhodospira halophila (strain DSM 244 / SL1)).